The following is a 196-amino-acid chain: Rac-like GTP-binding protein RAC9 (196 aa).

Gly-13–Thr-20 lines the GTP pocket. The Effector region motif lies at Tyr-35–Phe-43. GTP is bound by residues Asp-60–Gln-64 and Thr-118–Asp-121. The residue at position 193 (Cys-193) is a Cysteine methyl ester. A lipid anchor (S-geranylgeranyl cysteine) is attached at Cys-193. The propeptide at Ala-194 to Leu-196 is removed in mature form.

Belongs to the small GTPase superfamily. Rho family.

The protein localises to the cytoplasm. It localises to the membrane. Functionally, inactive GDP-bound Rho GTPases reside in the cytosol, are found in a complex with Rho GDP-dissociation inhibitors (Rho GDIs), and are released from the GDI protein in order to translocate to membranes upon activation. This chain is Rac-like GTP-binding protein RAC9 (RAC9), found in Gossypium hirsutum (Upland cotton).